Here is a 649-residue protein sequence, read N- to C-terminus: Centrosomal protein of 63 kDa-A (649 aa).

2 coiled-coil regions span residues 19 to 185 (DSCE…YQHQ) and 222 to 556 (EEEL…DAAS). The residue at position 560 (Ser560) is a Phosphoserine; by atm and atr. Positions 612–645 (FLQEEEQRSHELLQRLNAHIEELKQESQRTVEHF) form a coiled coil.

This sequence belongs to the CEP63 family. Post-translationally, phosphorylation at Ser-560 by atm and atr promotes its delocalization from the centrosome and impairs its ability to promote centrosome dependent spindle assembly.

It localises to the cytoplasm. It is found in the cytoskeleton. Its subcellular location is the microtubule organizing center. The protein localises to the centrosome. The protein resides in the centriole. Its function is as follows. Required for normal spindle assembly. Plays a key role in mother-centriole-dependent centriole duplication. Plays a role in DNA damage response. Following DNA damage, such as double-strand breaks (DSBs), is removed from centrosomes; this leads to the inactivation of spindle assembly and delay in mitotic progression. The chain is Centrosomal protein of 63 kDa-A (cep63-a) from Xenopus laevis (African clawed frog).